We begin with the raw amino-acid sequence, 356 residues long: Methionine import ATP-binding protein MetN (356 aa).

The ABC transporter domain maps to 7–250 (IKLDNIDVTF…PRESLTQDFI (244 aa)). 43–50 (GYSGAGKS) contributes to the ATP binding site.

It belongs to the ABC transporter superfamily. Methionine importer (TC 3.A.1.24) family. As to quaternary structure, the complex is composed of two ATP-binding proteins (MetN), two transmembrane proteins (MetI) and a solute-binding protein (MetQ).

It localises to the cell membrane. The catalysed reaction is L-methionine(out) + ATP + H2O = L-methionine(in) + ADP + phosphate + H(+). The enzyme catalyses D-methionine(out) + ATP + H2O = D-methionine(in) + ADP + phosphate + H(+). Its function is as follows. Part of the ABC transporter complex MetNIQ involved in methionine import. Responsible for energy coupling to the transport system. This Streptococcus agalactiae serotype III (strain NEM316) protein is Methionine import ATP-binding protein MetN.